Consider the following 863-residue polypeptide: MKSSEIRQKFLDFFETHGHVVVPSSPLVPGNDPTLLFTNAGMVQFKDVFLGQDKRPYVRAVSAQRCVRAGGKHNDLENVGYTARHHTFFEMLGNFSFGDYFKRNAILFAWEFLTGPLNIPKDKLWATVYAEDDEAADIWLNEVKIAPSRLVRIATSDNFWQMGETGPCGPCSEIFYDHGPEVAGGPPGSEDADGDRYVEIWNLVFMQYNRDTSGELHPLPKPSVDTGMGLERIAAVMQQVHSNYEIDLFRCLIEAAARVTGEQDLSNNSLKVIADHIRACAFLITDGVIPGNEGRGYVLRRILRRAIRHGYRLGQKQSFFHLLVDDLVDVMGQAYPELMAAKKHVIAVIRQEEERFAETLENGMGVLEAALARESNMLPGDVVFRLYDTFGFPVDLTADIARERGGGIDLAGFEMCMAQQRDRARASGKFTMQAGLEYVGLPTEFHGYETLQHEAHILVLYKEGSHVDFIEAGDEAVVVLDQTPFYAESGGQAGDSGELLSGSGTFTVKDTQKIQAKVFGHAGMLSSGRLVTGDRVIARVNPIARINTAYNHSATHLLHAALRQILGNHVTQKGSLVDADRLRFDFSHNSAMQANEIRQVENLVNAQIRKNHEVATQLMAYDEAVKQGAMALFGEKYSDTVRVVSMGDFSTELCGGTHVQHSGDIGFFRIVAESGVAAGIRRIEALTGEAALAYTQQQEQQLQQVSDVLKAAPHEAALKLSQVLDHVRQVEKEITVLRSKLAGMQSSSLIEQAQEIKGIRVLAAALENVNVRTLRETLDNFKSRLKSCVVVLGTIEDDKVMLIAGVTNDLTAKLKAGDLINFVAQQVGGKGGGRADMAQAGGTLPDKLPQALTSVAGWVERNL.

Residues His552, His556, Cys654, and His658 each contribute to the Zn(2+) site.

It belongs to the class-II aminoacyl-tRNA synthetase family. Zn(2+) serves as cofactor.

The protein localises to the cytoplasm. The enzyme catalyses tRNA(Ala) + L-alanine + ATP = L-alanyl-tRNA(Ala) + AMP + diphosphate. Its function is as follows. Catalyzes the attachment of alanine to tRNA(Ala) in a two-step reaction: alanine is first activated by ATP to form Ala-AMP and then transferred to the acceptor end of tRNA(Ala). Also edits incorrectly charged Ser-tRNA(Ala) and Gly-tRNA(Ala) via its editing domain. The sequence is that of Alanine--tRNA ligase from Nitrosomonas eutropha (strain DSM 101675 / C91 / Nm57).